The primary structure comprises 404 residues: NADH-quinone oxidoreductase subunit D 1 (404 aa).

This sequence belongs to the complex I 49 kDa subunit family. As to quaternary structure, NDH-1 is composed of 14 different subunits. Subunits NuoB, C, D, E, F, and G constitute the peripheral sector of the complex.

The protein localises to the cell inner membrane. It catalyses the reaction a quinone + NADH + 5 H(+)(in) = a quinol + NAD(+) + 4 H(+)(out). Functionally, NDH-1 shuttles electrons from NADH, via FMN and iron-sulfur (Fe-S) centers, to quinones in the respiratory chain. The immediate electron acceptor for the enzyme in this species is believed to be ubiquinone. Couples the redox reaction to proton translocation (for every two electrons transferred, four hydrogen ions are translocated across the cytoplasmic membrane), and thus conserves the redox energy in a proton gradient. In Sorangium cellulosum (strain So ce56) (Polyangium cellulosum (strain So ce56)), this protein is NADH-quinone oxidoreductase subunit D 1.